Here is a 737-residue protein sequence, read N- to C-terminus: Lysyl oxidase homolog 2A (737 aa).

A signal peptide spans 1 to 18 (MAVSSALCIFSLLVLAQA). SRCR domains follow at residues 29–130 (LRLA…VICN), 159–270 (IRPI…VSCV), 294–393 (VRLR…VRCN), and 403–512 (IRLS…VSCS). 9 disulfides stabilise this stretch: Cys55/Cys119, Cys68/Cys129, Cys99/Cys109, Cys188/Cys259, Cys201/Cys269, Cys235/Cys245, Cys319/Cys382, Cys332/Cys392, and Cys363/Cys373. N-linked (GlcNAc...) asparagine glycosylation occurs at Asn256. Asn423 carries an N-linked (GlcNAc...) asparagine glycan. 3 disulfide bridges follow: Cys432-Cys498, Cys445-Cys511, and Cys479-Cys489. A lysyl-oxidase like region spans residues 516–718 (PDLVLNAQLV…WTYSCHIGGS (203 aa)). The Ca(2+) site is built by Asp517 and Leu518. 4 disulfides stabilise this stretch: Cys541–Cys592, Cys547–Cys662, Cys624–Cys640, and Cys630–Cys652. Cu cation contacts are provided by His593, His595, and His597. A glycan (N-linked (GlcNAc...) asparagine) is linked at Asn611. Residues 620 to 656 (KASFCLEDTHCDEGISKRYHCANFGEQGITVGCWDTY) constitute a cross-link (lysine tyrosylquinone (Lys-Tyr)). At Tyr656 the chain carries 2',4',5'-topaquinone. Positions 689, 691, 694, and 695 each coordinate Ca(2+). Residues Cys699 and Cys713 are joined by a disulfide bond.

This sequence belongs to the lysyl oxidase family. Cu cation serves as cofactor. Requires lysine tyrosylquinone residue as cofactor. In terms of processing, the lysine tyrosylquinone cross-link (LTQ) is generated by condensation of the epsilon-amino group of a lysine with a topaquinone produced by oxidation of tyrosine.

It localises to the secreted. Its subcellular location is the extracellular space. The protein resides in the extracellular matrix. The protein localises to the basement membrane. It is found in the nucleus. It localises to the chromosome. Its subcellular location is the endoplasmic reticulum. The enzyme catalyses L-lysyl-[protein] + O2 + H2O = (S)-2-amino-6-oxohexanoyl-[protein] + H2O2 + NH4(+). Functionally, mediates the post-translational oxidative deamination of lysine residues on target proteins leading to the formation of deaminated lysine (allysine). Acts as a transcription corepressor and specifically mediates deamination of trimethylated 'Lys-4' of histone H3 (H3K4me3), a specific tag for epigenetic transcriptional activation. Shows no activity against histone H3 when it is trimethylated on 'Lys-9' (H3K9me3) or 'Lys-27' (H3K27me3) or when 'Lys-4' is monomethylated (H3K4me1) or dimethylated (H3K4me2). Also mediates deamination of methylated TAF10, a member of the transcription factor IID (TFIID) complex, which induces release of TAF10 from promoters, leading to inhibition of TFIID-dependent transcription. LOXL2-mediated deamination of TAF10 results in transcriptional repression of genes required for embryonic stem cell pluripotency. Involved in epithelial to mesenchymal transition (EMT) and participates in repression of E-cadherin, probably by mediating deamination of histone H3. When secreted into the extracellular matrix, promotes cross-linking of extracellular matrix proteins by mediating oxidative deamination of peptidyl lysine residues in precursors to fibrous collagen and elastin. Acts as a regulator of sprouting angiogenesis, probably via collagen IV scaffolding. Acts as a regulator of chondrocyte differentiation, probably by regulating expression of factors that control chondrocyte differentiation. Required with loxl2b for correct expression of Sox2 and for neural differentiation. This is Lysyl oxidase homolog 2A (loxl2a) from Danio rerio (Zebrafish).